Consider the following 199-residue polypeptide: DnaJ homolog subfamily C member 5B (199 aa).

2 positions are modified to phosphoserine: Ser-14 and Ser-16. The 66-residue stretch at 19 to 84 folds into the J domain; the sequence is ALYEILGLHK…SKRNIYDKYG (66 aa).

Interacts with the chaperone complex consisting of HSC70 and SGTA. Palmitoylated.

The protein localises to the membrane. The protein is DnaJ homolog subfamily C member 5B (DNAJC5B) of Sus scrofa (Pig).